A 214-amino-acid polypeptide reads, in one-letter code: RNA pyrophosphohydrolase (214 aa).

The Nudix hydrolase domain maps to 6 to 149; sequence GFRPNVGIIL…KRDVYQLALT (144 aa). A Nudix box motif is present at residues 38 to 59; sequence GGIKYGETPMQAMYRELHEETG.

This sequence belongs to the Nudix hydrolase family. RppH subfamily. The cofactor is a divalent metal cation.

In terms of biological role, accelerates the degradation of transcripts by removing pyrophosphate from the 5'-end of triphosphorylated RNA, leading to a more labile monophosphorylated state that can stimulate subsequent ribonuclease cleavage. The sequence is that of RNA pyrophosphohydrolase from Burkholderia orbicola (strain MC0-3).